Consider the following 214-residue polypeptide: Thiamine import ATP-binding protein ThiQ (214 aa).

The region spanning Ile-2–Ile-212 is the ABC transporter domain. Gly-31–Ser-38 lines the ATP pocket.

Belongs to the ABC transporter superfamily. Thiamine importer (TC 3.A.1.19.1) family. As to quaternary structure, the complex is composed of two ATP-binding proteins (ThiQ), two transmembrane proteins (ThiP) and a solute-binding protein (ThiB).

Its subcellular location is the cell inner membrane. The enzyme catalyses thiamine(out) + ATP + H2O = thiamine(in) + ADP + phosphate + H(+). In terms of biological role, part of the ABC transporter complex ThiBPQ involved in thiamine import. Responsible for energy coupling to the transport system. In Histophilus somni (strain 129Pt) (Haemophilus somnus), this protein is Thiamine import ATP-binding protein ThiQ.